Here is a 235-residue protein sequence, read N- to C-terminus: Ribonuclease 3 (235 aa).

The RNase III domain occupies 8-137 (PAELARRIGI…VIGAIFLSGG (130 aa)). A Mg(2+)-binding site is contributed by E50. The active site involves D54. The Mg(2+) site is built by D123 and E126. E126 is a catalytic residue. One can recognise a DRBM domain in the interval 163–232 (DNKTAFQEWV…AGRAMREWAG (70 aa)). Positions 211–235 (QGRTKKEAEQQAAGRAMREWAGRKG) are disordered. A compositionally biased stretch (basic and acidic residues) spans 226–235 (AMREWAGRKG).

Belongs to the ribonuclease III family. In terms of assembly, homodimer. It depends on Mg(2+) as a cofactor.

Its subcellular location is the cytoplasm. The enzyme catalyses Endonucleolytic cleavage to 5'-phosphomonoester.. Digests double-stranded RNA. Involved in the processing of primary rRNA transcript to yield the immediate precursors to the large and small rRNAs (23S and 16S). Processes some mRNAs, and tRNAs when they are encoded in the rRNA operon. Processes pre-crRNA and tracrRNA of type II CRISPR loci if present in the organism. In Heliobacterium modesticaldum (strain ATCC 51547 / Ice1), this protein is Ribonuclease 3.